We begin with the raw amino-acid sequence, 505 residues long: Betaine aldehyde dehydrogenase 1 (505 aa).

Position 163–172 (163–172 (WNYPLLMATW)) interacts with betaine aldehyde. Residue 240 to 245 (GSTETG) coordinates NAD(+). Residues E262, 294-297 (QVCS), and C455 each bind betaine aldehyde. Catalysis depends on residues E262 and C296. Residues 262–263 (EL) and C296 contribute to the 4-aminobutanal site. W461 contacts 4-aminobutanal. A Microbody targeting signal motif is present at residues 503–505 (SKL).

It belongs to the aldehyde dehydrogenase family. In terms of assembly, homodimer.

Its subcellular location is the peroxisome. It catalyses the reaction betaine aldehyde + NAD(+) + H2O = glycine betaine + NADH + 2 H(+). The protein operates within amine and polyamine biosynthesis; betaine biosynthesis via choline pathway; betaine from betaine aldehyde: step 1/1. In terms of biological role, dehydrogenase that can use N-acetyl-gamma-aminobutyraldehyde (NAGABald), gamma-guanidinobutyraldehyde (GGBald), betaine aldehyde (Bet-ald), gamma-aminobutyraldehyde (GAB-ald), acetaldehyde, 4-aminobutylaldehyde (AB-ald), 3-aminopropionaldehyde (AP-ald), 4-N-trimethylaminobutyraldehyde (TMAB-ald) and 3-N-trimethylaminopropionaldehyde (TMAP-ald) as substrates. Catalyzes the oxidation of GAB-ald more efficiently than Bet-ald. May convert acetaldehyde into acetate, thus facilitating the production of acetyl-CoA in peroxisomes under anaerobic conditions. This chain is Betaine aldehyde dehydrogenase 1 (BADH1), found in Oryza sativa subsp. japonica (Rice).